A 687-amino-acid chain; its full sequence is TWiK family of potassium channels protein 12 (687 aa).

The Cytoplasmic portion of the chain corresponds to 1–21; sequence MTLFQKLQWFCQLIRLRAYYK. A helical transmembrane segment spans residues 22 to 42; that stretch reads FLLLIAYTLFGAWLFRFYELQ. N-linked (GlcNAc...) asparagine glycans are attached at residues asparagine 53, asparagine 77, and asparagine 98. An intramembrane region (pore-forming) is located at residues 112-132; it reads WTWTGAMFYAGQLYTTIGYGY. A helical transmembrane segment spans residues 142–162; sequence ICTVLYALFGIPCFLMYLKAI. Over 163–212 the chain is Cytoplasmic; it reads GKTLSKRLKKIYKRVRRSAFGKFLLPTRVTATKDGFEDPDASAEERKRKP. A helical transmembrane segment spans residues 213–233; the sequence is FPIPIAIILLIIWICFSASMF. An intramembrane region (pore-forming) is located at residues 242-262; sequence FPSAVYFFIVSISTVGLGDML. The helical transmembrane segment at 270 to 290 threads the bilayer; that stretch reads VFNFLLILFGLALLSMCFELI. The Cytoplasmic portion of the chain corresponds to 291–687; the sequence is TDRIAKWKQK…SKRDAPVNIV (397 aa). The segment at 661 to 687 is disordered; that stretch reads SPSTSTSTSMIDSGYDLSKRDAPVNIV. Residues 677–687 show a composition bias toward basic and acidic residues; it reads LSKRDAPVNIV.

It belongs to the two pore domain potassium channel (TC 1.A.1.8) family.

Its subcellular location is the membrane. In Caenorhabditis briggsae, this protein is TWiK family of potassium channels protein 12.